Reading from the N-terminus, the 91-residue chain is Alpha-latrotoxin associated low molecular weight protein SGV150-311 (91 aa).

An N-terminal signal peptide occupies residues 1–18 (MNVLHFLILLMSVVSVFC).

Belongs to the arthropod CHH/MIH/GIH/VIH hormone family. In terms of tissue distribution, expressed by the venom gland.

The protein resides in the secreted. Functionally, may increase the toxicity of alpha-latrotoxin and/or other venom components. Is non-toxic to mice and to the cockroach Periplaneta americana. The chain is Alpha-latrotoxin associated low molecular weight protein SGV150-311 from Steatoda grossa (False black widow).